The chain runs to 328 residues: MRIIFWGTPEYSISSLDIFIKSKHEVIAVVSQPDKKRSRGKKLISSPVKSFAEQESIKIYTPEKIRDNINFINELKSLSCDLFIVIAYGKILPKEILEIPKFGCWNAHASLLPRWRGAAPIQWSLMKGDEFTGVGIMKMNEGLDTGDLLLEEKIKIDNNDNLITLTEKLSILSAKLFLNATSLLEENINKNTNYQLTKQNTLGREITYARMIEKSDYKVDWGNEAIKISRKIKALYPRANTTFRGKNLKIIKIKVLSSDEINNEKYCLMSNYSKPGIILAVLENEGIIISTKTDPIILLEAKLEGKNISSKKQLIQQLKPSLGEYLSN.

Residue 110–113 (SLLP) participates in (6S)-5,6,7,8-tetrahydrofolate binding.

Belongs to the Fmt family.

The catalysed reaction is L-methionyl-tRNA(fMet) + (6R)-10-formyltetrahydrofolate = N-formyl-L-methionyl-tRNA(fMet) + (6S)-5,6,7,8-tetrahydrofolate + H(+). Attaches a formyl group to the free amino group of methionyl-tRNA(fMet). The formyl group appears to play a dual role in the initiator identity of N-formylmethionyl-tRNA by promoting its recognition by IF2 and preventing the misappropriation of this tRNA by the elongation apparatus. The polypeptide is Methionyl-tRNA formyltransferase (Prochlorococcus marinus (strain MIT 9312)).